Consider the following 308-residue polypeptide: Extended-spectrum beta-lactamase PER-1 (308 aa).

The signal sequence occupies residues 1–26; the sequence is MNVIIKAVVTASTLLMVSFSSFETSA. Serine 71 (nucleophile; acyl-ester intermediate) is an active-site residue. Lysine 74, serine 135, and glutamate 171 together coordinate a beta-lactam.

It belongs to the class-A beta-lactamase family. As to quaternary structure, monomer.

It is found in the secreted. It carries out the reaction a beta-lactam + H2O = a substituted beta-amino acid. Its activity is regulated as follows. Inhibited by the beta-lactamase-blocking agents clavulanic acid, tazobactam and sulbactam. Not inhibited by EDTA. In terms of biological role, extended-spectrum beta-lactamase (ESBL) which confers resistance to penicillins, as well as first-, second- and third-generation cephalosporins, but not the carbapenem, imipenem, in the JM109 strain of E.coli. Has cefotaxime-hydrolyzing activity. This chain is Extended-spectrum beta-lactamase PER-1, found in Pseudomonas aeruginosa.